A 321-amino-acid chain; its full sequence is ATP-dependent 6-phosphofructokinase (321 aa).

G12 is a binding site for ATP. ADP-binding positions include 22–26 (RGVVR) and 55–60 (RYSVSD). Residues 73 to 74 (RF) and 103 to 106 (GDGS) each bind ATP. Residue D104 coordinates Mg(2+). Position 127–129 (127–129 (TID)) interacts with substrate. D129 acts as the Proton acceptor in catalysis. R156 provides a ligand contact to ADP. Substrate-binding positions include R164 and 171–173 (MGR). Residues 187-189 (GCE) and 215-217 (KRH) contribute to the ADP site. Residues E224, R245, and 251–254 (HVQR) each bind substrate.

It belongs to the phosphofructokinase type A (PFKA) family. ATP-dependent PFK group I subfamily. Prokaryotic clade 'B1' sub-subfamily. Homotetramer. Mg(2+) is required as a cofactor.

It localises to the cytoplasm. It catalyses the reaction beta-D-fructose 6-phosphate + ATP = beta-D-fructose 1,6-bisphosphate + ADP + H(+). It participates in carbohydrate degradation; glycolysis; D-glyceraldehyde 3-phosphate and glycerone phosphate from D-glucose: step 3/4. Its activity is regulated as follows. Allosterically activated by ADP and other diphosphonucleosides, and allosterically inhibited by phosphoenolpyruvate. Its function is as follows. Catalyzes the phosphorylation of D-fructose 6-phosphate to fructose 1,6-bisphosphate by ATP, the first committing step of glycolysis. The polypeptide is ATP-dependent 6-phosphofructokinase (Mannheimia succiniciproducens (strain KCTC 0769BP / MBEL55E)).